The primary structure comprises 175 residues: Albumin-1 (175 aa).

A disulfide bridge connects residues Cys-135 and Cys-141.

The protein belongs to the protease inhibitor I3 (leguminous Kunitz-type inhibitor) family.

In terms of biological role, 2S seed storage protein. This is Albumin-1 from Psophocarpus tetragonolobus (Winged bean).